A 328-amino-acid polypeptide reads, in one-letter code: D-cysteine desulfhydrase (328 aa).

Residue K51 is modified to N6-(pyridoxal phosphate)lysine.

It belongs to the ACC deaminase/D-cysteine desulfhydrase family. As to quaternary structure, homodimer. Requires pyridoxal 5'-phosphate as cofactor.

The catalysed reaction is D-cysteine + H2O = hydrogen sulfide + pyruvate + NH4(+) + H(+). Catalyzes the alpha,beta-elimination reaction of D-cysteine and of several D-cysteine derivatives. It could be a defense mechanism against D-cysteine. In Shigella sonnei (strain Ss046), this protein is D-cysteine desulfhydrase.